The chain runs to 322 residues: MKKKNVVVFGGGTGLSVLLRGLKTFPVSITAIVTVADDGGSSGRLRKELDIPPPGDVRNVLVALSEVEPLLEQLFQHRFENGNGLSGHSLGNLLLAGMTSITGDFARGISEMSKVLNVRGKVLPASNRSIILHGEMEDGTIVTGESSIPKAGKKIKRVFLTPKDTKPLREGLEAIRKADVIVIGPGSLYTSVLPNLLVPGICEAIKQSTARKVYICNVMTQNGETDGYTASDHLQAIMDHCGVGIVDDILVHGEPISDTVKAKYAKEKAEPVIVDEHKLKALGVGTISDYFVLEQDDVLRHNASKVSEAILEGKPRTSSSIQ.

Residues Thr-13, 217–219, 263–267, and 300–301 contribute to the NAD(+) site; these read NVM, KYAKE, and RH.

It belongs to the gluconeogenesis factor family.

Its subcellular location is the cytoplasm. In terms of biological role, required for morphogenesis under gluconeogenic growth conditions. In Halalkalibacterium halodurans (strain ATCC BAA-125 / DSM 18197 / FERM 7344 / JCM 9153 / C-125) (Bacillus halodurans), this protein is Gluconeogenesis factor.